A 345-amino-acid polypeptide reads, in one-letter code: Carbamoyl phosphate synthase small chain (345 aa).

Residues 1–169 (MKKYLVMEDG…FVKGEEGGTV (169 aa)) form a CPSase region. S45, G213, and G215 together coordinate L-glutamine. Residues 168 to 345 (TVLFIDLGSK…GEMKRRIGYA (178 aa)) form the Glutamine amidotransferase type-1 domain. C242 functions as the Nucleophile in the catalytic mechanism. The L-glutamine site is built by F243, Q246, N282, G284, and Y285. Catalysis depends on residues H321 and E323.

It belongs to the CarA family. As to quaternary structure, composed of two chains; the small (or glutamine) chain promotes the hydrolysis of glutamine to ammonia, which is used by the large (or ammonia) chain to synthesize carbamoyl phosphate. Tetramer of heterodimers (alpha,beta)4.

It catalyses the reaction hydrogencarbonate + L-glutamine + 2 ATP + H2O = carbamoyl phosphate + L-glutamate + 2 ADP + phosphate + 2 H(+). It carries out the reaction L-glutamine + H2O = L-glutamate + NH4(+). It functions in the pathway amino-acid biosynthesis; L-arginine biosynthesis; carbamoyl phosphate from bicarbonate: step 1/1. It participates in pyrimidine metabolism; UMP biosynthesis via de novo pathway; (S)-dihydroorotate from bicarbonate: step 1/3. In terms of biological role, small subunit of the glutamine-dependent carbamoyl phosphate synthetase (CPSase). CPSase catalyzes the formation of carbamoyl phosphate from the ammonia moiety of glutamine, carbonate, and phosphate donated by ATP, constituting the first step of 2 biosynthetic pathways, one leading to arginine and/or urea and the other to pyrimidine nucleotides. The small subunit (glutamine amidotransferase) binds and cleaves glutamine to supply the large subunit with the substrate ammonia. In Thermoplasma volcanium (strain ATCC 51530 / DSM 4299 / JCM 9571 / NBRC 15438 / GSS1), this protein is Carbamoyl phosphate synthase small chain.